The sequence spans 233 residues: Homeobox protein EMX1 (233 aa).

The homeobox DNA-binding region spans 135–194 (PKRIRTAFSPSQLLRLERAFEKNHYVVGAERKQLASSLSLSETQVKVWFQNRRTKYKRQK). Positions 192-233 (RQKLEEEGPDSDQKKKGSHHINRWRLATKQPNGEDIDVTSND) are disordered. Residues 193 to 206 (QKLEEEGPDSDQKK) are compositionally biased toward basic and acidic residues.

The protein belongs to the EMX homeobox family.

Its subcellular location is the nucleus. Functionally, may function in combinations with OTX1/2 to specify cell fates in the developing central nervous system. This Xenopus tropicalis (Western clawed frog) protein is Homeobox protein EMX1 (emx1).